The sequence spans 145 residues: Large ribosomal subunit protein uL15 (145 aa).

The tract at residues M1–L57 is disordered. Residues R21 to G31 are compositionally biased toward gly residues.

Belongs to the universal ribosomal protein uL15 family. As to quaternary structure, part of the 50S ribosomal subunit.

Functionally, binds to the 23S rRNA. The polypeptide is Large ribosomal subunit protein uL15 (Pseudomonas fluorescens (strain Pf0-1)).